We begin with the raw amino-acid sequence, 759 residues long: Forkhead box protein M1 (759 aa).

The interval 1 to 92 (MRTSPRRPLI…MRLPSNPPQS (92 aa)) is disordered. Positions 48–63 (LAHELEDMAPKSKADQ) are enriched in basic and acidic residues. The fork-head DNA-binding region spans 260–358 (RPPYSYMALI…KTASPMSPAD (99 aa)). Disordered stretches follow at residues 420 to 450 (AESS…KHLG), 516 to 535 (SANP…PSNV), and 596 to 631 (KEHF…RDPV). Residues 601-612 (KPTTSSTPSKPT) are compositionally biased toward low complexity.

Localized to the animal hemisphere of early cleavage stage embryos. During neurulation, expressed in the neural folds. Later, expressed in the spinal cord and in the eye field. During tailbud stages, expression is still restricted to the neuroectoderm, predominantly to the hindbrain, the eye and the spinal cord. With ongoing development, expression is also found at lower levels in the branchial arches. At stage 35, expressed in the rhombencephalon and in the eye retina.

Its subcellular location is the nucleus. Functionally, transcription factor regulating the expression of cell cycle genes essential for DNA replication and mitosis. Plays a role in the control of cell proliferation. Also plays a role in DNA break repair, participating in the DNA damage checkpoint response. Promotes transcription of PHB2. The chain is Forkhead box protein M1 from Xenopus laevis (African clawed frog).